The chain runs to 104 residues: Transcription initiation factor IIA subunit 2 (104 aa).

Belongs to the TFIIA subunit 2 family. TFIIA is a heterodimer of the large unprocessed subunit 1 and a small subunit gamma.

The protein resides in the nucleus. TFIIA is a component of the transcription machinery of RNA polymerase II and plays an important role in transcriptional activation. TFIIA in a complex with TBP mediates transcriptional activity. This is Transcription initiation factor IIA subunit 2 from Schistosoma mansoni (Blood fluke).